The primary structure comprises 346 residues: Ribosomal RNA small subunit methyltransferase H (346 aa).

S-adenosyl-L-methionine contacts are provided by residues 46–48 (GGY), aspartate 63, phenylalanine 90, aspartate 113, and glutamine 120. Residues 270–327 (GGSAGSRHMPETHMRLPSFTPAVKGAVGPTPEEEERNPRARSAKLRAGIRTENSPLED) are disordered.

Belongs to the methyltransferase superfamily. RsmH family.

The protein resides in the cytoplasm. The enzyme catalyses cytidine(1402) in 16S rRNA + S-adenosyl-L-methionine = N(4)-methylcytidine(1402) in 16S rRNA + S-adenosyl-L-homocysteine + H(+). In terms of biological role, specifically methylates the N4 position of cytidine in position 1402 (C1402) of 16S rRNA. This Brucella ovis (strain ATCC 25840 / 63/290 / NCTC 10512) protein is Ribosomal RNA small subunit methyltransferase H.